A 236-amino-acid polypeptide reads, in one-letter code: Phosphoribosylaminoimidazole-succinocarboxamide synthase (236 aa).

It belongs to the SAICAR synthetase family.

It carries out the reaction 5-amino-1-(5-phospho-D-ribosyl)imidazole-4-carboxylate + L-aspartate + ATP = (2S)-2-[5-amino-1-(5-phospho-beta-D-ribosyl)imidazole-4-carboxamido]succinate + ADP + phosphate + 2 H(+). It functions in the pathway purine metabolism; IMP biosynthesis via de novo pathway; 5-amino-1-(5-phospho-D-ribosyl)imidazole-4-carboxamide from 5-amino-1-(5-phospho-D-ribosyl)imidazole-4-carboxylate: step 1/2. The protein is Phosphoribosylaminoimidazole-succinocarboxamide synthase of Campylobacter jejuni subsp. jejuni serotype O:6 (strain 81116 / NCTC 11828).